Consider the following 127-residue polypeptide: Ribonuclease VapC9 (127 aa).

Residues 2 to 115 form the PINc domain; it reads IVVDASAALA…VTADLRLSDT (114 aa). Asp5 and Asp91 together coordinate Mg(2+).

It belongs to the PINc/VapC protein family. It depends on Mg(2+) as a cofactor.

In terms of biological role, toxic component of a type II toxin-antitoxin (TA) system. An RNase. The cognate antitoxin is VapB9. In Mycobacterium tuberculosis (strain CDC 1551 / Oshkosh), this protein is Ribonuclease VapC9.